We begin with the raw amino-acid sequence, 295 residues long: Geranylfarnesyl diphosphate synthase (295 aa).

Isopentenyl diphosphate is bound by residues K51, R54, and H83. D90 and D94 together coordinate Mg(2+). R99 serves as a coordination point for an all-trans-polyprenyl diphosphate. R100 lines the isopentenyl diphosphate pocket. An all-trans-polyprenyl diphosphate is bound by residues K174, T175, and Q212.

Belongs to the FPP/GGPP synthase family. Homodimer. Mg(2+) serves as cofactor.

The catalysed reaction is isopentenyl diphosphate + (2E,6E,10E)-geranylgeranyl diphosphate = (2E,6E,10E,14E)-geranylfarnesyl diphosphate + diphosphate. Its function is as follows. Involved in biosynthesis of the polyprenyl side-chain of methanophenazine, an electron carrier utilized for methanogenesis. Catalyzes the condensation of isopentenyl pyrophosphate with the allylic pyrophosphates to yield geranylfarnesyl diphosphate (GFPP). It prefers geranylgeranyl diphosphate (GGPP) and farnesyl diphosphate (FPP) as allylic substrate. This is Geranylfarnesyl diphosphate synthase from Methanosarcina mazei (strain ATCC BAA-159 / DSM 3647 / Goe1 / Go1 / JCM 11833 / OCM 88) (Methanosarcina frisia).